The primary structure comprises 106 residues: Small ribosomal subunit protein uS10 (106 aa).

Belongs to the universal ribosomal protein uS10 family. Part of the 30S ribosomal subunit.

Its function is as follows. Involved in the binding of tRNA to the ribosomes. The sequence is that of Small ribosomal subunit protein uS10 from Synechococcus sp. (strain CC9605).